A 176-amino-acid polypeptide reads, in one-letter code: NAD(P)H-quinone oxidoreductase subunit 6, chloroplastic (176 aa).

Helical transmembrane passes span 10–30 (FLLV…VLLT), 33–53 (IYSA…HIPA), 61–81 (AQLL…VMFM), 92–112 (LWTV…VSLI), and 152–172 (FFLP…GAIA).

The protein belongs to the complex I subunit 6 family. As to quaternary structure, NDH is composed of at least 16 different subunits, 5 of which are encoded in the nucleus.

It is found in the plastid. The protein resides in the chloroplast thylakoid membrane. It carries out the reaction a plastoquinone + NADH + (n+1) H(+)(in) = a plastoquinol + NAD(+) + n H(+)(out). The catalysed reaction is a plastoquinone + NADPH + (n+1) H(+)(in) = a plastoquinol + NADP(+) + n H(+)(out). Functionally, NDH shuttles electrons from NAD(P)H:plastoquinone, via FMN and iron-sulfur (Fe-S) centers, to quinones in the photosynthetic chain and possibly in a chloroplast respiratory chain. The immediate electron acceptor for the enzyme in this species is believed to be plastoquinone. Couples the redox reaction to proton translocation, and thus conserves the redox energy in a proton gradient. This chain is NAD(P)H-quinone oxidoreductase subunit 6, chloroplastic (ndhG), found in Nandina domestica (Heavenly bamboo).